A 404-amino-acid chain; its full sequence is Deoxyguanosinetriphosphate triphosphohydrolase-like protein (404 aa).

A disordered region spans residues 1–33 (MSVGMAAPRAAYGCDPDRSRGRQFAEPPSNNRS). The region spanning 69–217 (RLTHSLEVAQ…AAIADDIAYD (149 aa)) is the HD domain.

This sequence belongs to the dGTPase family. Type 2 subfamily.

The sequence is that of Deoxyguanosinetriphosphate triphosphohydrolase-like protein from Rhodopseudomonas palustris (strain BisB5).